A 122-amino-acid polypeptide reads, in one-letter code: Probable DNA-directed RNA polymerase II subunit RPB11 (122 aa).

The protein belongs to the archaeal Rpo11/eukaryotic RPB11/RPC19 RNA polymerase subunit family. As to quaternary structure, component of the RNA polymerase II (Pol II) complex consisting of 12 subunits.

It is found in the nucleus. Functionally, DNA-dependent RNA polymerase catalyzes the transcription of DNA into RNA using the four ribonucleoside triphosphates as substrates. Component of RNA polymerase II which synthesizes mRNA precursors and many functional non-coding RNAs. Pol II is the central component of the basal RNA polymerase II transcription machinery. It is composed of mobile elements that move relative to each other. RPB11 is part of the core element with the central large cleft. The chain is Probable DNA-directed RNA polymerase II subunit RPB11 (rpb-11) from Caenorhabditis elegans.